An 878-amino-acid polypeptide reads, in one-letter code: Alanine--tRNA ligase (878 aa).

Zn(2+) is bound by residues H571, H575, C673, and H677.

The protein belongs to the class-II aminoacyl-tRNA synthetase family. It depends on Zn(2+) as a cofactor.

The protein resides in the cytoplasm. It carries out the reaction tRNA(Ala) + L-alanine + ATP = L-alanyl-tRNA(Ala) + AMP + diphosphate. Catalyzes the attachment of alanine to tRNA(Ala) in a two-step reaction: alanine is first activated by ATP to form Ala-AMP and then transferred to the acceptor end of tRNA(Ala). Also edits incorrectly charged Ser-tRNA(Ala) and Gly-tRNA(Ala) via its editing domain. In Syntrophus aciditrophicus (strain SB), this protein is Alanine--tRNA ligase.